The chain runs to 1166 residues: IQ domain-containing protein N (1166 aa).

The segment covering 1–19 (MQPATQLQFTNHLSPNGQC) has biased composition (polar residues). The segment at 1-56 (MQPATQLQFTNHLSPNGQCILQPPPTPSLPDKMEKAPPQPQHEGLKSEEHLPQQPA) is disordered. Residues 89–118 (HARAATLIQANWRGYRLRQKLISQMTAAKA) form the IQ 1 domain. Disordered regions lie at residues 431 to 450 (VCPG…VATP), 769 to 797 (LSAP…TTQG), and 829 to 848 (DSGA…PCQE). 5 consecutive IQ domains span residues 907–932 (AVTT…RRAT), 928–955 (HRRA…RATT), 952–979 (RATT…MLHP), 1091–1119 (RDKA…MAAK), and 1114–1143 (QQMA…LLGP). Residues 1145–1166 (DPWSSSQHMHWASSQHTHWPGI) are disordered. Residues 1147 to 1166 (WSSSQHMHWASSQHTHWPGI) show a composition bias toward polar residues.

In terms of assembly, interacts with calmodulin.

Its function is as follows. Essential for spermiogenesis and fertilization. May be required for manchette assembly in elongating spermatids. This Macaca fascicularis (Crab-eating macaque) protein is IQ domain-containing protein N (IQCN).